Reading from the N-terminus, the 277-residue chain is Undecaprenyl-diphosphatase (277 aa).

The next 5 membrane-spanning stretches (helical) occupy residues 85 to 105, 109 to 129, 188 to 208, 218 to 238, and 256 to 276; these read VNIVVAFLPAALLGLVFAGAI, LFAPVPVAIAFIVGGFVILWV, ATEFSFFLAIPTLMGATVYSV, ADIPLFGLGGLAAFFSAFLCV, and YRIGFGLFVLLSAHYGWVVWA.

It belongs to the UppP family.

Its subcellular location is the cell inner membrane. It catalyses the reaction di-trans,octa-cis-undecaprenyl diphosphate + H2O = di-trans,octa-cis-undecaprenyl phosphate + phosphate + H(+). In terms of biological role, catalyzes the dephosphorylation of undecaprenyl diphosphate (UPP). Confers resistance to bacitracin. This is Undecaprenyl-diphosphatase from Herminiimonas arsenicoxydans.